Reading from the N-terminus, the 480-residue chain is Chromosomal replication initiator protein DnaA (480 aa).

A domain I, interacts with DnaA modulators region spans residues 1–71; sequence MNLTKVWNTT…REQLGSVVGF (71 aa). The domain II stretch occupies residues 71-139; it reads FPVDVRIVLA…LELHRAVRSS (69 aa). Positions 91-115 are disordered; the sequence is SINGRHAARDTRKSDHHAPLSGGYG. Positions 97 to 108 are enriched in basic and acidic residues; that stretch reads AARDTRKSDHHA. The tract at residues 140-356 is domain III, AAA+ region; that stretch reads MLNPRYTFDR…GCLNRVTAYA (217 aa). The ATP site is built by G184, G186, K187, and T188. The tract at residues 357 to 480 is domain IV, binds dsDNA; it reads QMYNIPVTIE…IRERLMNSAV (124 aa).

Belongs to the DnaA family. Oligomerizes as a right-handed, spiral filament on DNA at oriC.

The protein localises to the cytoplasm. Plays an essential role in the initiation and regulation of chromosomal replication. ATP-DnaA binds to the origin of replication (oriC) to initiate formation of the DNA replication initiation complex once per cell cycle. Binds the DnaA box (a 9 base pair repeat at the origin) and separates the double-stranded (ds)DNA. Forms a right-handed helical filament on oriC DNA; dsDNA binds to the exterior of the filament while single-stranded (ss)DNA is stabiized in the filament's interior. The ATP-DnaA-oriC complex binds and stabilizes one strand of the AT-rich DNA unwinding element (DUE), permitting loading of DNA polymerase. After initiation quickly degrades to an ADP-DnaA complex that is not apt for DNA replication. Binds acidic phospholipids. In Roseiflexus castenholzii (strain DSM 13941 / HLO8), this protein is Chromosomal replication initiator protein DnaA.